Here is a 156-residue protein sequence, read N- to C-terminus: Small ribosomal subunit protein uS7 (156 aa).

Belongs to the universal ribosomal protein uS7 family. In terms of assembly, part of the 30S ribosomal subunit. Contacts proteins S9 and S11.

Its function is as follows. One of the primary rRNA binding proteins, it binds directly to 16S rRNA where it nucleates assembly of the head domain of the 30S subunit. Is located at the subunit interface close to the decoding center, probably blocks exit of the E-site tRNA. This Rhizobium rhizogenes (strain K84 / ATCC BAA-868) (Agrobacterium radiobacter) protein is Small ribosomal subunit protein uS7.